Consider the following 815-residue polypeptide: Phosphatidylinositol 4-phosphate 5-kinase 9 (815 aa).

MORN repeat units lie at residues 58-80 (YSGS…DGCV), 81-103 (YDGE…SGAS), 104-126 (YDGE…NKLT), 127-149 (YKGR…NGDV), 150-172 (FEGS…NKNV), 173-195 (YLGD…TGDS), 196-218 (YEGS…DGGC), and 219-240 (YVGT…AGTR). The 419-residue stretch at 391–809 (GHRSYDLMLS…RFLEFIKKVF (419 aa)) folds into the PIPK domain. Residues 769-790 (YNMTKKIEHAYKSLHFDSLSIS) form an activation loop region.

As to quaternary structure, interacts with CINV1. In terms of tissue distribution, widely expressed.

It is found in the membrane. The protein resides in the nucleus. The catalysed reaction is a 1,2-diacyl-sn-glycero-3-phospho-(1D-myo-inositol 4-phosphate) + ATP = a 1,2-diacyl-sn-glycero-3-phospho-(1D-myo-inositol-4,5-bisphosphate) + ADP + H(+). Its function is as follows. Plays a role in sugar-mediated root development. Interaction with CINV1 induces repression of CINV1 activity and negative regulation of sugar-mediated root cell elongation. This Arabidopsis thaliana (Mouse-ear cress) protein is Phosphatidylinositol 4-phosphate 5-kinase 9 (PIP5K9).